Here is a 400-residue protein sequence, read N- to C-terminus: Vitamin K-dependent protein Z (400 aa).

Residues 1–23 (MAGCVPLLQGLVLVLALHRVEPS) form the signal peptide. Positions 24 to 40 (VFLPASKANDVLVRWKR) are excised as a propeptide. The Gla domain occupies 41–86 (AGSYLLEELFEGNLEKECYEEICVYEEAREVFENEVVTDEFWRRYK). 4-carboxyglutamate occurs at positions 47, 48, 51, 55, 57, 60, 61, 66, 67, 70, 73, 75, and 80. A disulfide bond links Cys58 and Cys63. EGF-like domains are found at residues 87-123 (GGSP…SNCE) and 125-166 (AKNE…KQCV). Disulfide bonds link Cys91/Cys102, Cys96/Cys111, Cys113/Cys122, Cys129/Cys141, Cys137/Cys150, Cys152/Cys165, and Cys203/Cys219. An O-linked (Glc...) serine glycan is attached at Ser93. N-linked (GlcNAc...) asparagine glycosylation is present at Asn99. At Asp104 the chain carries (3R)-3-hydroxyaspartate. Residues 175-400 (VLTSEKRAPD…YSLWFKQIMN (226 aa)) form the Peptidase S1 domain. Residues Asn225, Asn233, Asn306, and Asn332 are each glycosylated (N-linked (GlcNAc...) asparagine). A disulfide bridge connects residues Cys327 and Cys341.

The protein belongs to the peptidase S1 family. As to quaternary structure, interacts with SERPINA10. The iron and 2-oxoglutarate dependent 3-hydroxylation of aspartate and asparagine is (R) stereospecific within EGF domains. Plasma.

The protein localises to the secreted. Appears to assist hemostasis by binding thrombin and promoting its association with phospholipid vesicles. Inhibits activity of the coagulation protease factor Xa in the presence of SERPINA10, calcium and phospholipids. The sequence is that of Vitamin K-dependent protein Z (PROZ) from Homo sapiens (Human).